A 223-amino-acid polypeptide reads, in one-letter code: UPF0441 protein YgiB (223 aa).

The segment covering T178–T195 has biased composition (low complexity). Positions T178 to G223 are disordered. Polar residues predominate over residues A204–G223.

Belongs to the UPF0441 family.

The polypeptide is UPF0441 protein YgiB (Salmonella paratyphi B (strain ATCC BAA-1250 / SPB7)).